The primary structure comprises 609 residues: Glutamine--fructose-6-phosphate aminotransferase [isomerizing] (609 aa).

Cys-2 acts as the Nucleophile; for GATase activity in catalysis. The Glutamine amidotransferase type-2 domain maps to 2–219 (CGIFGYLGNQ…SGEFAIVSQG (218 aa)). SIS domains follow at residues 285-426 (LSDV…VHGA) and 458-599 (WAQP…IDCP). Lys-604 (for Fru-6P isomerization activity) is an active-site residue.

As to quaternary structure, homodimer.

Its subcellular location is the cytoplasm. It carries out the reaction D-fructose 6-phosphate + L-glutamine = D-glucosamine 6-phosphate + L-glutamate. In terms of biological role, catalyzes the first step in hexosamine metabolism, converting fructose-6P into glucosamine-6P using glutamine as a nitrogen source. The chain is Glutamine--fructose-6-phosphate aminotransferase [isomerizing] from Chlamydia pneumoniae (Chlamydophila pneumoniae).